The primary structure comprises 473 residues: Fumarate hydratase class II (473 aa).

Substrate contacts are provided by residues 104–106 (SGT), 128–131 (HPND), 138–140 (SSN), and Thr-186. His-187 acts as the Proton donor/acceptor in catalysis. The active site involves Ser-318. Substrate is bound by residues Ser-319 and 324 to 326 (KVN).

The protein belongs to the class-II fumarase/aspartase family. Fumarase subfamily. As to quaternary structure, homotetramer.

The protein resides in the cytoplasm. The enzyme catalyses (S)-malate = fumarate + H2O. It functions in the pathway carbohydrate metabolism; tricarboxylic acid cycle; (S)-malate from fumarate: step 1/1. Involved in the TCA cycle. Catalyzes the stereospecific interconversion of fumarate to L-malate. This Corynebacterium efficiens (strain DSM 44549 / YS-314 / AJ 12310 / JCM 11189 / NBRC 100395) protein is Fumarate hydratase class II.